The sequence spans 549 residues: Chaperonin GroEL (549 aa).

ATP contacts are provided by residues 30 to 33 (TLGP), Lys51, 87 to 91 (DGTTT), Gly415, 479 to 481 (NAA), and Asp495.

Belongs to the chaperonin (HSP60) family. Forms a cylinder of 14 subunits composed of two heptameric rings stacked back-to-back. Interacts with the co-chaperonin GroES.

The protein resides in the cytoplasm. It carries out the reaction ATP + H2O + a folded polypeptide = ADP + phosphate + an unfolded polypeptide.. Functionally, together with its co-chaperonin GroES, plays an essential role in assisting protein folding. The GroEL-GroES system forms a nano-cage that allows encapsulation of the non-native substrate proteins and provides a physical environment optimized to promote and accelerate protein folding. In Stenotrophomonas maltophilia (strain R551-3), this protein is Chaperonin GroEL.